Here is a 627-residue protein sequence, read N- to C-terminus: Coiled-coil domain-containing protein 22 (627 aa).

A sufficient for interaction with COMMD1 region spans residues 1-321 (MEEADRILIH…VSDVPATSRR (321 aa)). Residues 1 to 447 (MEEADRILIH…LQDCRELESS (447 aa)) form a sufficicient and required for interaction with CCDC93 region. Residues 218–243 (TGRDRPGDEDWVHRTSRLPPQEDTRA) are disordered. Residues 219 to 230 (GRDRPGDEDWVH) are compositionally biased toward basic and acidic residues. The stretch at 320-627 (RRPEQVTWAA…AGLLGRVREA (308 aa)) forms a coiled coil. At Ser410 the chain carries Phosphoserine.

It belongs to the CCDC22 family. In terms of assembly, component of the commander complex consisting of the CCC subcomplex and the retriever subcomplex. Component of the CCC (COMMD/CCDC22/CCDC93) subcomplex consisting of COMMD1, COMMD2, COMMD3, COMMD4, COMMD5, COMMD6, COMMD7, COMMD8, COMMD9, COMMD10, CCDC22 and CCDC93. Forms a coiled-coil heterodimer with CCDC22; this heterodimer interacts with the guanine nucleotide exchange factor DENND10; the interaction is direct. Interacts with CUL1, CUL2, CUL3, SKP1, BTRC. Interacts with SNX17 and SNX31. Interacts with CPNE1 and CPNE4. As to expression, widely expressed in adult tissues and in fetal liver and brain, with highest levels in prostate and lowest in skeletal muscle.

The protein localises to the endosome. It is found in the cytoplasm. The protein resides in the cytoskeleton. Its subcellular location is the microtubule organizing center. It localises to the centrosome. Functionally, component of the commander complex that is essential for endosomal recycling of transmembrane cargos; the Commander complex is composed of composed of the CCC subcomplex and the retriever subcomplex. Component of the CCC complex, which is involved in the regulation of endosomal recycling of surface proteins, including integrins, signaling receptor and channels. Involved in regulation of NF-kappa-B signaling. Promotes ubiquitination of I-kappa-B-kinase subunit IKBKB and its subsequent proteasomal degradation leading to NF-kappa-B activation; the function may involve association with COMMD8 and a CUL1-dependent E3 ubiquitin ligase complex. May down-regulate NF-kappa-B activity via association with COMMD1 and involving a CUL2-dependent E3 ubiquitin ligase complex. Regulates the cellular localization of COMM domain-containing proteins, such as COMMD1 and COMMD10. Component of the CCC complex, which is involved in the regulation of endosomal recycling of surface proteins, including integrins, signaling receptor and channels. The CCC complex associates with SNX17, retriever and WASH complexes to prevent lysosomal degradation and promote cell surface recycling of numerous cargos such as integrins ITGA5:ITGB1. Plays a role in copper ion homeostasis. Involved in copper-dependent ATP7A trafficking between the trans-Golgi network and vesicles in the cell periphery; the function is proposed to depend on its association within the CCC complex and cooperation with the WASH complex on early endosomes. (Microbial infection) The CCC complex, in collaboration with the heterotrimeric retriever complex, mediates the exit of human papillomavirus to the cell surface. In Homo sapiens (Human), this protein is Coiled-coil domain-containing protein 22 (CCDC22).